Consider the following 282-residue polypeptide: Stage 0 sporulation protein J (282 aa).

Positions glutamate 139–leucine 158 form a DNA-binding region, H-T-H motif.

Belongs to the ParB family.

It localises to the cytoplasm. The protein localises to the nucleoid. In terms of biological role, required for the initiation of sporulation and for normal chromosome segregation. Antagonizes sporulation inhibition by Soj. It probably interacts with a specific DNA site and other proteins involved in partitioning and cell division, and antagonizes Soj in response to cell cycle events related to chromosome partitioning. The chain is Stage 0 sporulation protein J from Bacillus subtilis (strain 168).